Reading from the N-terminus, the 875-residue chain is Alanine--tRNA ligase (875 aa).

Histidine 564, histidine 568, cysteine 666, and histidine 670 together coordinate Zn(2+).

This sequence belongs to the class-II aminoacyl-tRNA synthetase family. As to quaternary structure, homotetramer. The cofactor is Zn(2+).

It is found in the cytoplasm. The enzyme catalyses tRNA(Ala) + L-alanine + ATP = L-alanyl-tRNA(Ala) + AMP + diphosphate. Catalyzes the attachment of alanine to tRNA(Ala) in a two-step reaction: alanine is first activated by ATP to form Ala-AMP and then transferred to the acceptor end of tRNA(Ala). Also edits incorrectly charged Ser-tRNA(Ala) and Gly-tRNA(Ala) via its editing domain. This chain is Alanine--tRNA ligase, found in Enterobacter sp. (strain 638).